Reading from the N-terminus, the 334-residue chain is Lipoyl synthase (334 aa).

The disordered stretch occupies residues 8–33 (LNNDTRPKVEAPARPRHPEKAHRPDT). Basic and acidic residues predominate over residues 12–33 (TRPKVEAPARPRHPEKAHRPDT). Residues Cys68, Cys73, Cys79, Cys94, Cys98, Cys101, and Ser307 each contribute to the [4Fe-4S] cluster site. The 217-residue stretch at 80-296 (WEKRHATFMI…ETTAYAKGFL (217 aa)) folds into the Radical SAM core domain.

Belongs to the radical SAM superfamily. Lipoyl synthase family. It depends on [4Fe-4S] cluster as a cofactor.

It is found in the cytoplasm. The catalysed reaction is [[Fe-S] cluster scaffold protein carrying a second [4Fe-4S](2+) cluster] + N(6)-octanoyl-L-lysyl-[protein] + 2 oxidized [2Fe-2S]-[ferredoxin] + 2 S-adenosyl-L-methionine + 4 H(+) = [[Fe-S] cluster scaffold protein] + N(6)-[(R)-dihydrolipoyl]-L-lysyl-[protein] + 4 Fe(3+) + 2 hydrogen sulfide + 2 5'-deoxyadenosine + 2 L-methionine + 2 reduced [2Fe-2S]-[ferredoxin]. It functions in the pathway protein modification; protein lipoylation via endogenous pathway; protein N(6)-(lipoyl)lysine from octanoyl-[acyl-carrier-protein]: step 2/2. Catalyzes the radical-mediated insertion of two sulfur atoms into the C-6 and C-8 positions of the octanoyl moiety bound to the lipoyl domains of lipoate-dependent enzymes, thereby converting the octanoylated domains into lipoylated derivatives. The chain is Lipoyl synthase from Methylorubrum populi (strain ATCC BAA-705 / NCIMB 13946 / BJ001) (Methylobacterium populi).